The primary structure comprises 99 residues: Ubiquitin-related modifier 1 (99 aa).

Glycine 99 carries the 1-thioglycine modification. A Glycyl lysine isopeptide (Gly-Lys) (interchain with K-? in acceptor proteins) cross-link involves residue glycine 99.

The protein belongs to the URM1 family. C-terminal thiocarboxylation occurs in 2 steps, it is first acyl-adenylated (-COAMP) via the hesA/moeB/thiF part of UBA4, then thiocarboxylated (-COSH) via the rhodanese domain of UBA4.

Its subcellular location is the cytoplasm. The protein operates within tRNA modification; 5-methoxycarbonylmethyl-2-thiouridine-tRNA biosynthesis. Acts as a sulfur carrier required for 2-thiolation of mcm(5)S(2)U at tRNA wobble positions of cytosolic tRNA(Lys), tRNA(Glu) and tRNA(Gln). Serves as sulfur donor in tRNA 2-thiolation reaction by being thiocarboxylated (-COSH) at its C-terminus by the MOCS3 homolog UBA4. The sulfur is then transferred to tRNA to form 2-thiolation of mcm(5)S(2)U. Prior mcm(5) tRNA modification by the elongator complex is required for 2-thiolation. Also acts as a ubiquitin-like protein (UBL) that is covalently conjugated via an isopeptide bond to lysine residues of target proteins such as AHP1. The thiocarboxylated form serves as substrate for conjugation and oxidative stress specifically induces the formation of UBL-protein conjugates. In Yarrowia lipolytica (strain CLIB 122 / E 150) (Yeast), this protein is Ubiquitin-related modifier 1.